The sequence spans 387 residues: Peroxisomal membrane protein LPX1 (387 aa).

Positions 385 to 387 (QKL) are peroxisomal targeting signal type 1.

Its subcellular location is the peroxisome matrix. Its function is as follows. Has acyl esterase, lipase and phospholipase A activity. The protein is Peroxisomal membrane protein LPX1 (LPX1) of Saccharomyces cerevisiae (strain ATCC 204508 / S288c) (Baker's yeast).